The primary structure comprises 208 residues: MFVSTAFAQTATESQPASTAGEHGAADAVHTETGVAHDAGHGSGVFPPFDSTHYASQVLWLAITFGLFYLFLSRVVLPRIGGVIETRRDRIAQDLEQAARLKQDADNAIAAYEQELAQARSKAASIAEAAREKGKGEADAERASAEAVLESKLKEAEERIAAIKAKAMSDVGNIAEETMATIVEQLLGLTADKASVSEAVKAIRASNA.

Over residues 1–18 (MFVSTAFAQTATESQPAS) the composition is skewed to polar residues. The tract at residues 1–26 (MFVSTAFAQTATESQPASTAGEHGAA) is disordered. A helical transmembrane segment spans residues 56 to 78 (SQVLWLAITFGLFYLFLSRVVLP).

This sequence belongs to the ATPase B chain family. In terms of assembly, F-type ATPases have 2 components, F(1) - the catalytic core - and F(0) - the membrane proton channel. F(1) has five subunits: alpha(3), beta(3), gamma(1), delta(1), epsilon(1). F(0) has three main subunits: a(1), b(2) and c(10-14). The alpha and beta chains form an alternating ring which encloses part of the gamma chain. F(1) is attached to F(0) by a central stalk formed by the gamma and epsilon chains, while a peripheral stalk is formed by the delta and b chains.

It is found in the cell inner membrane. F(1)F(0) ATP synthase produces ATP from ADP in the presence of a proton or sodium gradient. F-type ATPases consist of two structural domains, F(1) containing the extramembraneous catalytic core and F(0) containing the membrane proton channel, linked together by a central stalk and a peripheral stalk. During catalysis, ATP synthesis in the catalytic domain of F(1) is coupled via a rotary mechanism of the central stalk subunits to proton translocation. Its function is as follows. Component of the F(0) channel, it forms part of the peripheral stalk, linking F(1) to F(0). The protein is ATP synthase subunit b of Brucella melitensis biotype 1 (strain ATCC 23456 / CCUG 17765 / NCTC 10094 / 16M).